Consider the following 200-residue polypeptide: MKSLHTICLLFIFVARGNSRSCDFCHNIGKDCDGYEQECSSPEDVCGKVFLEISSASLSVRTVHKNCFSSSICKLGQIDVNIGHHSYIRGRVNCCEKEPCEDQPFPGLPLSRPNGYYCPGALGLFTEDSTEYEAICHGTETKCINIVGHRYENFPGDITYNLKGCVSSCPLLSLSNATREENRNYLQKVECKDAIRLASL.

Residues 1–19 (MKSLHTICLLFIFVARGNS) form the signal peptide. 8 disulfides stabilise this stretch: Cys-22/Cys-46, Cys-25/Cys-32, Cys-39/Cys-67, Cys-73/Cys-94, Cys-95/Cys-100, Cys-118/Cys-143, Cys-136/Cys-165, and Cys-169/Cys-191. Asn-176 carries an N-linked (GlcNAc...) asparagine glycan.

This sequence belongs to the CNF-like-inhibitor family. In terms of assembly, occurs as a mixture of oligomers. Tetrameric arrangement appears to be the predominant quaternary structure. Expressed by the liver.

It localises to the secreted. Functionally, inhibits the enzymatic activity of phospholipase A2 (PA2). The chain is Phospholipase A2 inhibitor LNF2 from Lachesis muta muta (Bushmaster).